Reading from the N-terminus, the 227-residue chain is MELFETNPYFFPEQRFYDGENFLGSRLQGYEAAAFPERPEVTLCPESRGALEEKDSTLPEHCPGQCLPWACKICKRKTVSIDRRRAATLREKRRLKKVNEAFEALKRSTLLNPNQRLPKVEILRSAIQYIERLQSLLSSLNQQEREQRELRYRPAAPQPAAPSECGSGSSSCSPEWSTQLEFGTNPADHLLSDDQAEDRNLHSLSSIVESIAVEDVAVTFPEERVQN.

Positions 82–133 (DRRRAATLREKRRLKKVNEAFEALKRSTLLNPNQRLPKVEILRSAIQYIERL) constitute a bHLH domain. The interval 147-196 (QRELRYRPAAPQPAAPSECGSGSSSCSPEWSTQLEFGTNPADHLLSDDQA) is disordered. Positions 161–175 (APSECGSGSSSCSPE) are enriched in low complexity.

In terms of assembly, homodimer and heterodimer. Efficient DNA binding requires dimerization with another bHLH protein.

Its subcellular location is the nucleus. In terms of biological role, acts as a transcriptional activator that promotes transcription of muscle-specific target genes and plays a role in muscle differentiation. Induces fibroblasts to differentiate into myoblasts. Probable sequence specific DNA-binding protein. This chain is Myogenin (MYOG), found in Gallus gallus (Chicken).